Here is a 63-residue protein sequence, read N- to C-terminus: Large ribosomal subunit protein bL32 (63 aa).

Belongs to the bacterial ribosomal protein bL32 family.

The protein is Large ribosomal subunit protein bL32 of Lactobacillus delbrueckii subsp. bulgaricus (strain ATCC 11842 / DSM 20081 / BCRC 10696 / JCM 1002 / NBRC 13953 / NCIMB 11778 / NCTC 12712 / WDCM 00102 / Lb 14).